Here is a 1244-residue protein sequence, read N- to C-terminus: Mitotic chromosome and X-chromosome-associated protein mix-1 (1244 aa).

An ATP-binding site is contributed by 32–39 (GYNGSGKS). Positions 247–355 (VKKSAKEIED…AKRKEHEDSK (109 aa)) form a coiled coil. Residues 337–355 (LSKDREVLDAKRKEHEDSK) are compositionally biased toward basic and acidic residues. The segment at 337–369 (LSKDREVLDAKRKEHEDSKAANSKDIQSQSDDE) is disordered. Residues 356–365 (AANSKDIQSQ) are compositionally biased toward polar residues. Residues 415–472 (ITAAKKRGERLHNQIKHLEGEKATLSARSKSDIGSADNYQKEVDEINKQLQLLGFNID) adopt a coiled-coil conformation. Residues 526–654 (DVFGYVAHLI…DSLDVAREIA (129 aa)) enclose the SMC hinge domain. Coiled-coil stretches lie at residues 701–946 (PQIE…RKEA) and 975–1037 (YTVS…IATL). The segment covering 919–932 (AKTKSKREEKEKEL) has biased composition (basic and acidic residues). Positions 919 to 943 (AKTKSKREEKEKELTSLQQSEASNR) are disordered. Residues 1216–1232 (DAAAKKGAQKNDKEPPK) are compositionally biased toward basic and acidic residues. The segment at 1216 to 1244 (DAAAKKGAQKNDKEPPKKKPIVVDDDDFE) is disordered.

It belongs to the SMC family. SMC2 subfamily. In terms of assembly, component of the condensin I complex, which contains the mix-1/SMC2 and smc-4/SMC4 heterodimer, and three non SMC subunits that probably regulate the complex: dpy-26, capg-1 and dpy-28. Within the complex, interacts with smc-4, dpy-26, dpy-28 and capg-1. Interaction with smc-4 is required for mitotic chromosome localization. Component of the condensin II complex, which contains the mix-1/SMC2 and smc-4/SMC4 heterodimer, and three non SMC subunits, capg-2, kle-2 and hcp-6 that probably regulate the complex. Within the complex, interacts with smc-4, capg-2, kle-2 and hcp-6. Also a component of the condensin-like dosage compensation complex, which contains the mix-1/SMC2 and dpy-27/SMC4 heterodimer, and three non SMC subunits that probably regulate the complex: dpy-26, capg-1 and dpy-28. Within the complex, interacts with dpy-27, dpy-26, capg-1 and dpy-28. Requires capg-1 for hermaphrodite X chromosome localization. Interacts with smcl-1. As to expression, expressed in embryos and in adult somatic and germline tissues (at protein level).

It is found in the nucleus. The protein resides in the chromosome. In terms of biological role, essential protein required for both chromosome condensation and segregation and X-chromosome dosage compensation depending on its binding partners. Central component of the condensin I complex, a complex required for conversion of interphase chromatin into mitotic-like condense chromosomes. The condensin complex introduces positive supercoils into relaxed DNA in the presence of type I topoisomerases. Converts nicked DNA into positive knotted forms in the presence of type II topoisomerases. Central component of the condensin II complex, a complex that seems to play a role in prophase chromosome condensation and organization. Both the condensin complex I and II play a role in meiotic and mitotic chromosome segregation. Plays a role in robust cytokinesis upon the presence of chromatin obstructions. Also a member of the condensin I-like dosage compensation complex that associates specifically with hermaphrodite X chromosomes to reduce their gene transcription during interphase. The polypeptide is Mitotic chromosome and X-chromosome-associated protein mix-1 (mix-1) (Caenorhabditis elegans).